The sequence spans 444 residues: NAD(P)-specific glutamate dehydrogenase (444 aa).

Substrate-binding residues include Lys-88, Gln-109, and Lys-112. Lys-124 acts as the Proton donor in catalysis. Gly-163 is a binding site for substrate. NADP(+) is bound by residues Thr-207 and Asn-238. Ser-376 is a substrate binding site.

It belongs to the Glu/Leu/Phe/Val dehydrogenases family. As to quaternary structure, homohexamer.

It carries out the reaction L-glutamate + NAD(+) + H2O = 2-oxoglutarate + NH4(+) + NADH + H(+). The enzyme catalyses L-glutamate + NADP(+) + H2O = 2-oxoglutarate + NH4(+) + NADPH + H(+). Catalyzes the reversible oxidative deamination of glutamate to alpha-ketoglutarate and ammonia. P.ruminicola possess both NADP(H)- and NAD(H)-dependent activities on the same enzyme, suggesting that both anabolic and catabolic forms of the enzyme might occur. The sequence is that of NAD(P)-specific glutamate dehydrogenase (gdhA) from Xylanibacter ruminicola (Prevotella ruminicola).